The sequence spans 258 residues: Alpha-fibrinogenase (258 aa).

Residues 1–18 (MVLIRVLANLVMLHLSYG) form the signal peptide. A propeptide spanning residues 19–24 (EKSSEL) is cleaved from the precursor. Positions 25–249 (VIGGRPCNIN…YNDWIQSIIA (225 aa)) constitute a Peptidase S1 domain. 6 disulfides stabilise this stretch: cysteine 31-cysteine 163, cysteine 50-cysteine 66, cysteine 98-cysteine 256, cysteine 142-cysteine 210, cysteine 174-cysteine 189, and cysteine 200-cysteine 225. Asparagine 44 is a glycosylation site (N-linked (GlcNAc...) asparagine). Histidine 65 acts as the Charge relay system in catalysis. Residues asparagine 79 and asparagine 101 are each glycosylated (N-linked (GlcNAc...) asparagine). The active-site Charge relay system is the aspartate 110. Serine 204 (charge relay system) is an active-site residue.

It belongs to the peptidase S1 family. Snake venom subfamily. As to quaternary structure, monomer. In terms of processing, glycosylated. Contains 8.5% of hexoses, 5.8% of hexosamines and 0.8% of sialic acids. Expressed by the venom gland.

The protein localises to the secreted. Its activity is regulated as follows. Inhibited by diisopropylfluorophosphate (DFP) and PMSF, and partially by soybean trypsin inhibitor, but not by EDTA. Functionally, degrades alpha chain of fibrinogen (FGA), and has strong caseinolytic activity. Cleaves oxidized insulin B-chain at '40-Tyr-|-Leu-41', '48-Phe-|-Phe-49' and '49-Phe-|-Tyr-50', and glucagon at the bonds '62-Tyr-|-Ser-63', 66-Leu-|-Asp-67' and '78-Leu-|-Met-79' bonds. This Macrovipera lebetinus (Levantine viper) protein is Alpha-fibrinogenase.